Reading from the N-terminus, the 329-residue chain is Malate dehydrogenase (329 aa).

12–18 contributes to the NAD(+) binding site; that stretch reads GAAGQIG. Substrate-binding residues include Arg95 and Arg101. NAD(+)-binding positions include Asn108, Gln115, and 132 to 134; that span reads VGN. Residues Asn134 and Arg165 each contribute to the substrate site. Residue His190 is the Proton acceptor of the active site.

It belongs to the LDH/MDH superfamily. MDH type 2 family.

The catalysed reaction is (S)-malate + NAD(+) = oxaloacetate + NADH + H(+). Its function is as follows. Catalyzes the reversible oxidation of malate to oxaloacetate. The sequence is that of Malate dehydrogenase from Janthinobacterium sp. (strain Marseille) (Minibacterium massiliensis).